The primary structure comprises 393 residues: MGAVVSRWRAKPSTVEVLEGLDKDIQVLEEYREKNHKQLKLWVYRLLLYSALLYLMACAVVYAWYIPERMIGKLIVASPFLLFPLLIWLLRKLLIILYNKRTERNNEKLEELKAEKKKILEQVMETETYKNAKLILERFDPDSKKKLELETQPIGPTVTPRQGQELRHRLVSPRPTGRPPPVPVPGPSVPGTPLSAPGGPPEKGLSASTPQALIRRPGTPVGTPIPVMGMHPPGPPLARPVLPRERGAVDRVIEYLVGDGPQNRYALICQQCLSHNGMALKEEFEYIAFRCAYCYFLNPARKTRPQAPRLPEFAAEAKTSQDPPAVAMETDLPVSPPAPESKEAGPEPVKAGDGDPQTDEIPTEEMKPGDPEPHTDIPDKSDGEQDVSAMEVE.

Residues 1 to 45 lie on the Cytoplasmic side of the membrane; that stretch reads MGAVVSRWRAKPSTVEVLEGLDKDIQVLEEYREKNHKQLKLWVYR. A helical transmembrane segment spans residues 46-66; the sequence is LLLYSALLYLMACAVVYAWYI. The Lumenal segment spans residues 67-69; sequence PER. A helical transmembrane segment spans residues 70 to 90; that stretch reads MIGKLIVASPFLLFPLLIWLL. Residues 91 to 393 are Cytoplasmic-facing; sequence RKLLIILYNK…EQDVSAMEVE (303 aa). Positions 95–130 form a coiled coil; sequence IILYNKRTERNNEKLEELKAEKKKILEQVMETETYK. The tract at residues 146-209 is disordered; that stretch reads KLELETQPIG…PPEKGLSAST (64 aa). A compositionally biased stretch (pro residues) spans 176–190; sequence TGRPPPVPVPGPSVP. The segment at 269 to 294 adopts a C4-type; plays a role in ER morphology zinc-finger fold; the sequence is CQQCLSHNGMALKEEFEYIAFRCAYC. The disordered stretch occupies residues 314–393; it reads AAEAKTSQDP…EQDVSAMEVE (80 aa). 2 stretches are compositionally biased toward basic and acidic residues: residues 340–353 and 364–383; these read ESKEAGPEPVKAGD and EEMKPGDPEPHTDIPDKSDG.

This sequence belongs to the lunapark family. In terms of assembly, homodimer; homodimerization requires the C4-type zinc finger motif and decreases during mitosis in a phosphorylation-dependent manner. Phosphorylated. Phosphorylation occurs during interphase. Phosphorylation also occurs during mitosis; these phosphorylations reduce both its homodimerization and the ER three-way tubular junction formation.

It is found in the endoplasmic reticulum membrane. In terms of biological role, endoplasmic reticulum (ER)-shaping membrane protein that plays a role in determining ER morphology. Involved in the stabilization of nascent three-way ER tubular junctions within the ER network. May also play a role as a curvature-stabilizing protein within three-way ER tubular junction network. The sequence is that of Endoplasmic reticulum junction formation protein lunapark-A (lnpka) from Danio rerio (Zebrafish).